Reading from the N-terminus, the 332-residue chain is Fructose-1,6-bisphosphatase class 1 (332 aa).

Residues glutamate 94, aspartate 116, leucine 118, and aspartate 119 each coordinate Mg(2+). Substrate is bound by residues 119–122 (DGSS), asparagine 211, tyrosine 239, 257–259 (YLY), and lysine 269. A Mg(2+)-binding site is contributed by glutamate 275.

Belongs to the FBPase class 1 family. In terms of assembly, homotetramer. Requires Mg(2+) as cofactor.

It is found in the cytoplasm. The catalysed reaction is beta-D-fructose 1,6-bisphosphate + H2O = beta-D-fructose 6-phosphate + phosphate. It functions in the pathway carbohydrate biosynthesis; Calvin cycle. This chain is Fructose-1,6-bisphosphatase class 1, found in Synechococcus sp. (strain JA-3-3Ab) (Cyanobacteria bacterium Yellowstone A-Prime).